Here is a 161-residue protein sequence, read N- to C-terminus: Transcription elongation factor GreA (161 aa).

Residues 46–71 adopt a coiled-coil conformation; the sequence is AEYTAAKEKQSFLHGKLQELENNLAL.

Belongs to the GreA/GreB family.

Necessary for efficient RNA polymerase transcription elongation past template-encoded arresting sites. The arresting sites in DNA have the property of trapping a certain fraction of elongating RNA polymerases that pass through, resulting in locked ternary complexes. Cleavage of the nascent transcript by cleavage factors such as GreA or GreB allows the resumption of elongation from the new 3'terminus. GreA releases sequences of 2 to 3 nucleotides. The protein is Transcription elongation factor GreA of Syntrophus aciditrophicus (strain SB).